Here is a 29-residue protein sequence, read N- to C-terminus: Brevinin-2Rd (29 aa).

The cysteines at positions 23 and 29 are disulfide-linked.

As to expression, expressed by the skin glands.

The protein localises to the secreted. Functionally, antimicrobial peptide. This chain is Brevinin-2Rd, found in Pelophylax ridibundus (Marsh frog).